A 277-amino-acid polypeptide reads, in one-letter code: Shikimate dehydrogenase (NADP(+)) (277 aa).

Residues 20-22 and Thr67 contribute to the shikimate site; that span reads SLS. Catalysis depends on Lys71, which acts as the Proton acceptor. Asp83 is a binding site for NADP(+). Shikimate is bound by residues Asn92 and Asp107. Residues 131–135 and Ile219 contribute to the NADP(+) site; that span reads GAGGV. Tyr221 serves as a coordination point for shikimate. Residue Gly242 coordinates NADP(+).

This sequence belongs to the shikimate dehydrogenase family. Homodimer.

It carries out the reaction shikimate + NADP(+) = 3-dehydroshikimate + NADPH + H(+). It functions in the pathway metabolic intermediate biosynthesis; chorismate biosynthesis; chorismate from D-erythrose 4-phosphate and phosphoenolpyruvate: step 4/7. In terms of biological role, involved in the biosynthesis of the chorismate, which leads to the biosynthesis of aromatic amino acids. Catalyzes the reversible NADPH linked reduction of 3-dehydroshikimate (DHSA) to yield shikimate (SA). The chain is Shikimate dehydrogenase (NADP(+)) from Pelobacter propionicus (strain DSM 2379 / NBRC 103807 / OttBd1).